The sequence spans 158 residues: MGRFTFVSFGLLVVFLSLSGTGADFDCIPGWSAYDRYCYQAFSEPKNWEDAESFCEEGVKTSHLVSIESSGEGDFVAQLVSEKIKTSFQYVWIGLRIQNKEQQCRSEWTDASSVNYENLIKQFSKKCYALKKGTELRTWFNVYCGTENPFVCKYTPEC.

Residues 1-23 form the signal peptide; that stretch reads MGRFTFVSFGLLVVFLSLSGTGA. Intrachain disulfides connect C27–C38, C55–C152, and C127–C144. The 120-residue stretch at 34–153 folds into the C-type lectin domain; sequence YDRYCYQAFS…CGTENPFVCK (120 aa).

The protein belongs to the snaclec family. As to quaternary structure, tetramer of 4 heterodimers of alpha and beta subunits; disulfide-linked. In terms of tissue distribution, expressed by the venom gland.

The protein resides in the secreted. In terms of biological role, snaclec that strongly induces platelet aggregation, in a dose-dependent manner. This chain is Snaclec jerdonuxin subunit alpha, found in Protobothrops jerdonii (Jerdon's pitviper).